Consider the following 264-residue polypeptide: Glycosylphosphatidylinositol anchor biosynthesis protein 11 (264 aa).

Positions methionine 1–glutamate 45 are disordered. The next 6 helical transmembrane spans lie at asparagine 49–tryptophan 69, leucine 83–alanine 103, leucine 132–phenylalanine 152, alanine 160–tyrosine 180, serine 202–leucine 222, and valine 233–leucine 253.

This sequence belongs to the PIGF family.

It is found in the endoplasmic reticulum membrane. Its pathway is glycolipid biosynthesis; glycosylphosphatidylinositol-anchor biosynthesis. Functionally, acts in the GPI biosynthetic pathway between GlcNAc-PI synthesis and GPI transfer to protein. This is Glycosylphosphatidylinositol anchor biosynthesis protein 11 (GPI11) from Pyricularia oryzae (strain 70-15 / ATCC MYA-4617 / FGSC 8958) (Rice blast fungus).